A 258-amino-acid chain; its full sequence is Imidazole glycerol phosphate synthase subunit HisF (258 aa).

Catalysis depends on residues D11 and D130.

The protein belongs to the HisA/HisF family. In terms of assembly, heterodimer of HisH and HisF.

The protein localises to the cytoplasm. It catalyses the reaction 5-[(5-phospho-1-deoxy-D-ribulos-1-ylimino)methylamino]-1-(5-phospho-beta-D-ribosyl)imidazole-4-carboxamide + L-glutamine = D-erythro-1-(imidazol-4-yl)glycerol 3-phosphate + 5-amino-1-(5-phospho-beta-D-ribosyl)imidazole-4-carboxamide + L-glutamate + H(+). It functions in the pathway amino-acid biosynthesis; L-histidine biosynthesis; L-histidine from 5-phospho-alpha-D-ribose 1-diphosphate: step 5/9. IGPS catalyzes the conversion of PRFAR and glutamine to IGP, AICAR and glutamate. The HisF subunit catalyzes the cyclization activity that produces IGP and AICAR from PRFAR using the ammonia provided by the HisH subunit. The sequence is that of Imidazole glycerol phosphate synthase subunit HisF from Escherichia coli O6:K15:H31 (strain 536 / UPEC).